We begin with the raw amino-acid sequence, 327 residues long: Glycerol-3-phosphate dehydrogenase [NAD(P)+] (327 aa).

Residues tryptophan 15, arginine 35, and lysine 109 each contribute to the NADPH site. Lysine 109, glycine 137, and serine 139 together coordinate sn-glycerol 3-phosphate. An NADPH-binding site is contributed by alanine 141. Residues lysine 192, aspartate 245, serine 255, arginine 256, and asparagine 257 each contribute to the sn-glycerol 3-phosphate site. Residue lysine 192 is the Proton acceptor of the active site. Arginine 256 lines the NADPH pocket. NADPH-binding residues include leucine 275 and glutamate 277.

Belongs to the NAD-dependent glycerol-3-phosphate dehydrogenase family.

It is found in the cytoplasm. The catalysed reaction is sn-glycerol 3-phosphate + NAD(+) = dihydroxyacetone phosphate + NADH + H(+). It catalyses the reaction sn-glycerol 3-phosphate + NADP(+) = dihydroxyacetone phosphate + NADPH + H(+). Its pathway is membrane lipid metabolism; glycerophospholipid metabolism. Its function is as follows. Catalyzes the reduction of the glycolytic intermediate dihydroxyacetone phosphate (DHAP) to sn-glycerol 3-phosphate (G3P), the key precursor for phospholipid synthesis. The chain is Glycerol-3-phosphate dehydrogenase [NAD(P)+] from Chelativorans sp. (strain BNC1).